Reading from the N-terminus, the 240-residue chain is Dihydromonapterin reductase (240 aa).

Y152 serves as the catalytic Proton acceptor.

Belongs to the short-chain dehydrogenases/reductases (SDR) family. FolM subfamily.

The catalysed reaction is (6S)-5,6,7,8-tetrahydrofolate + NADP(+) = 7,8-dihydrofolate + NADPH + H(+). It carries out the reaction 7,8-dihydromonapterin + NADPH + H(+) = 5,6,7,8-tetrahydromonapterin + NADP(+). In terms of biological role, catalyzes the reduction of dihydromonapterin to tetrahydromonapterin. Also has lower activity with dihydrofolate. The chain is Dihydromonapterin reductase (folM) from Escherichia coli O6:K15:H31 (strain 536 / UPEC).